A 211-amino-acid polypeptide reads, in one-letter code: Probable nicotinate-nucleotide adenylyltransferase (211 aa).

It belongs to the NadD family.

It catalyses the reaction nicotinate beta-D-ribonucleotide + ATP + H(+) = deamido-NAD(+) + diphosphate. Its pathway is cofactor biosynthesis; NAD(+) biosynthesis; deamido-NAD(+) from nicotinate D-ribonucleotide: step 1/1. In terms of biological role, catalyzes the reversible adenylation of nicotinate mononucleotide (NaMN) to nicotinic acid adenine dinucleotide (NaAD). This is Probable nicotinate-nucleotide adenylyltransferase from Thermoanaerobacter sp. (strain X514).